The primary structure comprises 173 residues: Chromophore lyase CpcS/CpeS 3 (173 aa).

This sequence belongs to the CpcS/CpeS biliprotein lyase family.

In terms of biological role, covalently attaches a chromophore to Cys residue(s) of phycobiliproteins. The protein is Chromophore lyase CpcS/CpeS 3 of Trichodesmium erythraeum (strain IMS101).